A 498-amino-acid polypeptide reads, in one-letter code: Beta-1,3-glucosyltransferase (498 aa).

The Cytoplasmic segment spans residues 1–6 (MRPPAC). A helical; Signal-anchor for type II membrane protein membrane pass occupies residues 7 to 27 (WWLLAPPALLALLTCSLAFGL). The Lumenal portion of the chain corresponds to 28 to 498 (ASEDTKKEVK…ETQKGFREEL (471 aa)). Residue asparagine 336 is glycosylated (N-linked (GlcNAc...) asparagine). Positions 495-498 (REEL) match the Prevents secretion from ER motif.

The protein belongs to the glycosyltransferase 31 family. In terms of tissue distribution, widely expressed, with highest levels in testis and uterus.

It is found in the endoplasmic reticulum membrane. It participates in protein modification; protein glycosylation. Its function is as follows. O-glucosyltransferase that transfers glucose toward fucose with a beta-1,3 linkage. Specifically glucosylates O-linked fucosylglycan on TSP type-1 domains of proteins, thereby contributing to elongation of O-fucosylglycan. The chain is Beta-1,3-glucosyltransferase from Homo sapiens (Human).